Reading from the N-terminus, the 216-residue chain is Thiamine-phosphate synthase (216 aa).

Residues 41–45 and D77 each bind 4-amino-2-methyl-5-(diphosphooxymethyl)pyrimidine; that span reads QLREK. Residues D78 and D97 each contribute to the Mg(2+) site. Residue S116 participates in 4-amino-2-methyl-5-(diphosphooxymethyl)pyrimidine binding. 143–145 is a binding site for 2-[(2R,5Z)-2-carboxy-4-methylthiazol-5(2H)-ylidene]ethyl phosphate; it reads TTS. K146 contacts 4-amino-2-methyl-5-(diphosphooxymethyl)pyrimidine. 2-[(2R,5Z)-2-carboxy-4-methylthiazol-5(2H)-ylidene]ethyl phosphate-binding positions include G174 and 194 to 195; that span reads IS.

Belongs to the thiamine-phosphate synthase family. It depends on Mg(2+) as a cofactor.

It carries out the reaction 2-[(2R,5Z)-2-carboxy-4-methylthiazol-5(2H)-ylidene]ethyl phosphate + 4-amino-2-methyl-5-(diphosphooxymethyl)pyrimidine + 2 H(+) = thiamine phosphate + CO2 + diphosphate. The enzyme catalyses 2-(2-carboxy-4-methylthiazol-5-yl)ethyl phosphate + 4-amino-2-methyl-5-(diphosphooxymethyl)pyrimidine + 2 H(+) = thiamine phosphate + CO2 + diphosphate. It catalyses the reaction 4-methyl-5-(2-phosphooxyethyl)-thiazole + 4-amino-2-methyl-5-(diphosphooxymethyl)pyrimidine + H(+) = thiamine phosphate + diphosphate. It functions in the pathway cofactor biosynthesis; thiamine diphosphate biosynthesis; thiamine phosphate from 4-amino-2-methyl-5-diphosphomethylpyrimidine and 4-methyl-5-(2-phosphoethyl)-thiazole: step 1/1. Functionally, condenses 4-methyl-5-(beta-hydroxyethyl)thiazole monophosphate (THZ-P) and 2-methyl-4-amino-5-hydroxymethyl pyrimidine pyrophosphate (HMP-PP) to form thiamine monophosphate (TMP). This chain is Thiamine-phosphate synthase, found in Pediococcus pentosaceus (strain ATCC 25745 / CCUG 21536 / LMG 10740 / 183-1w).